Here is a 139-residue protein sequence, read N- to C-terminus: Small ribosomal subunit protein bS16 (139 aa).

The segment at 84 to 139 is disordered; that stretch reads KGEPAPAPLLQPAEKAARPSFEAIGGEDEGKGEAITQKKKADKRDEAAAESSASEA.

The protein belongs to the bacterial ribosomal protein bS16 family.

The sequence is that of Small ribosomal subunit protein bS16 from Streptomyces lividans.